The chain runs to 469 residues: 3-isopropylmalate dehydratase large subunit (469 aa).

Residues Cys-347, Cys-407, and Cys-410 each coordinate [4Fe-4S] cluster.

Belongs to the aconitase/IPM isomerase family. LeuC type 1 subfamily. In terms of assembly, heterodimer of LeuC and LeuD. The cofactor is [4Fe-4S] cluster.

It catalyses the reaction (2R,3S)-3-isopropylmalate = (2S)-2-isopropylmalate. The protein operates within amino-acid biosynthesis; L-leucine biosynthesis; L-leucine from 3-methyl-2-oxobutanoate: step 2/4. Functionally, catalyzes the isomerization between 2-isopropylmalate and 3-isopropylmalate, via the formation of 2-isopropylmaleate. The sequence is that of 3-isopropylmalate dehydratase large subunit from Prochlorococcus marinus subsp. pastoris (strain CCMP1986 / NIES-2087 / MED4).